The following is a 427-amino-acid chain: MMQNDLSVFNEYESEVRSYVRGFPTVFHQAKGYKLWDLDGKEYVDFFSGAGALNYGHNDENMKQKLLTYIQEDGVTHSLDMATKAKGEFIDAFQNIILKPRNMDYKIMFPGPTGANSVESALKLARKVTGRTNVVSFTNGFHGMTIGALSVTGNKFKRNGAGMPLSNTSTLPYDQFLKESNNSIEYIENFLDNGGSGLDKPAAFIVETVQGEGGLNAASSEWLRSIEKICRERDIKLILDDVQAGVGRTGTFFSFEPAGIKPDFVCLSKSIGGNGSPLAITLVAPEYDKFAPGEHNGTFRGNNFAFVTGTEALNYWKDDRLEKNVQEKSERITSFLDDMIKKHPEMKGVRKGRGFMQGIMSPIEDLADNIAGRCFEHGLIMETAGAEDEVFKLFPPITIDDEGLERGLSILQQAIEEVTAESNLVAK.

An N6-(pyridoxal phosphate)lysine modification is found at Lys269.

The protein belongs to the class-III pyridoxal-phosphate-dependent aminotransferase family. Pyridoxal 5'-phosphate serves as cofactor.

It carries out the reaction L-2,4-diaminobutanoate + 2-oxoglutarate = L-aspartate 4-semialdehyde + L-glutamate. It participates in amine and polyamine biosynthesis; ectoine biosynthesis; L-ectoine from L-aspartate 4-semialdehyde: step 1/3. Functionally, catalyzes reversively the conversion of L-aspartate beta-semialdehyde (ASA) to L-2,4-diaminobutyrate (DABA) by transamination with L-glutamate. This is Diaminobutyrate--2-oxoglutarate transaminase (ectB) from Marinococcus halophilus.